A 168-amino-acid polypeptide reads, in one-letter code: uncharacterized protein (168 aa).

2 helical membrane passes run 41–61 (LLPW…LFFI) and 133–153 (KFVI…FFVL).

The protein resides in the cell membrane. This is an uncharacterized protein from Thermotoga maritima (strain ATCC 43589 / DSM 3109 / JCM 10099 / NBRC 100826 / MSB8).